Consider the following 456-residue polypeptide: Phospholipase A1 member A (456 aa).

A signal peptide spans 1-24 (MCPGLWGTCFWLWGSLLWLSIGRS). Ser-166 acts as the Nucleophile in catalysis. Asp-190 (charge relay system) is an active-site residue. Cys-245 and Cys-258 form a disulfide bridge. The active-site Charge relay system is His-260. Disulfide bonds link Cys-282–Cys-293 and Cys-296–Cys-304. The N-linked (GlcNAc...) asparagine glycan is linked to Asn-365.

Belongs to the AB hydrolase superfamily. Lipase family.

It localises to the secreted. The catalysed reaction is a 1,2-diacyl-sn-glycero-3-phospho-L-serine + H2O = a 2-acyl-sn-glycero-3-phospho-L-serine + a fatty acid + H(+). It carries out the reaction 1,2-di-(9Z)-octadecenoyl-sn-glycero-3-phospho-L-serine + H2O = 2-(9Z-octadecenoyl)-sn-glycero-3-phospho-L-serine + (9Z)-octadecenoate + H(+). The enzyme catalyses 1-hexadecanoyl-2-(5Z,8Z,11Z,14Z-eicosatetraenoyl)-sn-glycero-3-phospho-L-serine + H2O = 2-(5Z,8Z,11Z,14Z)-eicosatetraenoyl-sn-glycero-3-phospho-L-serine + hexadecanoate + H(+). It catalyses the reaction a 1-acyl-sn-glycero-3-phospho-L-serine + H2O = sn-glycero-3-phospho-L-serine + a fatty acid + H(+). The catalysed reaction is 1-(9Z-octadecenoyl)-sn-glycero-3-phospho-L-serine + H2O = sn-glycero-3-phospho-L-serine + (9Z)-octadecenoate + H(+). Hydrolyzes the ester bond of the acyl group attached at the sn-1 position of phosphatidylserines (phospholipase A1 activity) and 1-acyl-2-lysophosphatidylserines (lysophospholipase activity) in the pathway of phosphatidylserines acyl chain remodeling. Cleaves phosphatidylserines exposed on the outer leaflet of the plasma membrane of apoptotic cells producing 2-acyl-1-lysophosphatidylserines, which in turn enhance mast cell activation and histamine production. Has no activity toward other glycerophospholipids including phosphatidylcholines, phosphatidylethanolamines, phosphatidic acids or phosphatidylinositols, or glycerolipids such as triolein. The sequence is that of Phospholipase A1 member A from Rattus norvegicus (Rat).